A 406-amino-acid chain; its full sequence is MSGCPFMAKKHHFTFSELSLEDKHEDNSQEGLNKASKGGLIYGDYLQLDKVLNAQELQSEKKGNKIHDEHLFIVTHQAYELWFKQILWELDSVREIFQNGHVRDERNMLKVVARIHRISMILKLLVEQFSVLETMTAMDFFDFRDYLSPASGFQSLQFRLLENKIGVPEILRVPYNRRHYRDNFKGETNELLLRSEQEPTLLGLVEAWLERTPGLEEEGFHFWGKLEVNIFRALEEELQAAKTKPDSEDKEEHLAELQKQKELFGALFDERRHEHLLSKGERRLSYKALKGALMINFYREEPRFQVPFQLLTSLMEIDTLMTKWRYNHVCMVHRMIGSKAGTGGSSGYQYLRSTVSDRYKVFVDLFNLSTYLVPRHWVPRLNPSIHKFLYTAECCDSSYFSSDDSD.

Residues 72-76 and R144 contribute to the substrate site; that span reads FIVTH. H328 lines the heme pocket. T342 lines the substrate pocket.

Belongs to the tryptophan 2,3-dioxygenase family. Homotetramer. Dimer of dimers. It depends on heme as a cofactor.

It catalyses the reaction L-tryptophan + O2 = N-formyl-L-kynurenine. It participates in amino-acid degradation; L-tryptophan degradation via kynurenine pathway; L-kynurenine from L-tryptophan: step 1/2. In terms of biological role, heme-dependent dioxygenase that catalyzes the oxidative cleavage of the L-tryptophan (L-Trp) pyrrole ring and converts L-tryptophan to N-formyl-L-kynurenine. Catalyzes the oxidative cleavage of the indole moiety. This Xenopus laevis (African clawed frog) protein is Tryptophan 2,3-dioxygenase.